Here is a 468-residue protein sequence, read N- to C-terminus: UDP-N-acetylmuramate--L-alanine ligase (468 aa).

Residue 121-127 (GSHGKTT) coordinates ATP.

This sequence belongs to the MurCDEF family.

The protein resides in the cytoplasm. It carries out the reaction UDP-N-acetyl-alpha-D-muramate + L-alanine + ATP = UDP-N-acetyl-alpha-D-muramoyl-L-alanine + ADP + phosphate + H(+). It functions in the pathway cell wall biogenesis; peptidoglycan biosynthesis. Its function is as follows. Cell wall formation. This is UDP-N-acetylmuramate--L-alanine ligase from Borrelia garinii subsp. bavariensis (strain ATCC BAA-2496 / DSM 23469 / PBi) (Borreliella bavariensis).